A 160-amino-acid polypeptide reads, in one-letter code: Ribosomal RNA large subunit methyltransferase H (160 aa).

S-adenosyl-L-methionine is bound by residues Leu76, Gly108, and 127-132 (LGKMTW).

It belongs to the RNA methyltransferase RlmH family. In terms of assembly, homodimer.

Its subcellular location is the cytoplasm. The catalysed reaction is pseudouridine(1915) in 23S rRNA + S-adenosyl-L-methionine = N(3)-methylpseudouridine(1915) in 23S rRNA + S-adenosyl-L-homocysteine + H(+). Functionally, specifically methylates the pseudouridine at position 1915 (m3Psi1915) in 23S rRNA. The protein is Ribosomal RNA large subunit methyltransferase H of Rhizobium rhizogenes (strain K84 / ATCC BAA-868) (Agrobacterium radiobacter).